A 73-amino-acid chain; its full sequence is Putative antitoxin VapB21 (73 aa).

It belongs to the UPF0330 family.

In terms of biological role, possibly the antitoxin component of a type II toxin-antitoxin (TA) system. Its cognate toxin is VapC21 (Potential). This is Putative antitoxin VapB21 (vapB21) from Sulfurisphaera tokodaii (strain DSM 16993 / JCM 10545 / NBRC 100140 / 7) (Sulfolobus tokodaii).